Here is a 429-residue protein sequence, read N- to C-terminus: Adenylosuccinate synthetase (429 aa).

Residues 12–18 and 40–42 each bind GTP; these read GDEGKGK and GHT. Aspartate 13 serves as the catalytic Proton acceptor. Mg(2+) is bound by residues aspartate 13 and glycine 40. Residues 13 to 16, 38 to 41, threonine 129, arginine 143, glutamine 223, threonine 238, and arginine 302 each bind IMP; these read DEGK and NAGH. Residue histidine 41 is the Proton donor of the active site. 298–304 is a substrate binding site; the sequence is TVTGRPR. Residues arginine 304, 330–332, and 412–414 each bind GTP; these read KLD and STS.

The protein belongs to the adenylosuccinate synthetase family. As to quaternary structure, homodimer. It depends on Mg(2+) as a cofactor.

It localises to the cytoplasm. It catalyses the reaction IMP + L-aspartate + GTP = N(6)-(1,2-dicarboxyethyl)-AMP + GDP + phosphate + 2 H(+). It participates in purine metabolism; AMP biosynthesis via de novo pathway; AMP from IMP: step 1/2. In terms of biological role, plays an important role in the de novo pathway of purine nucleotide biosynthesis. Catalyzes the first committed step in the biosynthesis of AMP from IMP. This Rhodospirillum rubrum (strain ATCC 11170 / ATH 1.1.1 / DSM 467 / LMG 4362 / NCIMB 8255 / S1) protein is Adenylosuccinate synthetase.